The following is a 1551-amino-acid chain: Serine/threonine-protein kinase MRCK gamma (1551 aa).

The Protein kinase domain maps to 71–337 (FEILKVIGRG…LDDFRKHPFF (267 aa)). ATP-binding positions include 77–85 (IGRGAFGEV) and lysine 100. Aspartate 195 functions as the Proton acceptor in the catalytic mechanism. Phosphoserine; by autocatalysis is present on residues serine 216 and serine 228. The residue at position 234 (threonine 234) is a Phosphothreonine; by autocatalysis. In terms of domain architecture, AGC-kinase C-terminal spans 338 to 408 (EGVDWERLAT…TSGSPFDVQS (71 aa)). Coiled coils occupy residues 442-675 (QPQE…TESN) and 729-801 (KARR…QARG). The segment at 578-605 (QESSQAKTVHAAPETNGIGSPEGQSQEA) is disordered. Residues 820-886 (TEKDSAKDPG…SHTLRPRSFP (67 aa)) are disordered. Residues 839-849 (AEAELRPEGRR) show a composition bias toward basic and acidic residues. The Phorbol-ester/DAG-type zinc-finger motif lies at 877 to 926 (SHTLRPRSFPSPTKCLRCTSLMLGLGRQGLGCDTCGYFCHSACASQAPPC). A PH domain is found at 946–1065 (GTAYEGFLSV…WLQVLGELQR (120 aa)). One can recognise a CNH domain in the interval 1091–1365 (LPHALCAAVI…RPLNPEGSLF (275 aa)). The region spanning 1436–1449 (ISPPTNFNHLVHVG) is the CRIB domain. A disordered region spans residues 1441–1551 (NFNHLVHVGP…PPDPESESSP (111 aa)). Basic and acidic residues predominate over residues 1455 to 1468 (PNTRDGTRAQEQKS). Position 1481 is a phosphoserine (serine 1481). Residues 1511–1527 (TSLSSESVSCPQGSLSP) show a composition bias toward polar residues.

It belongs to the protein kinase superfamily. AGC Ser/Thr protein kinase family. DMPK subfamily. In terms of assembly, homodimer and homotetramer via the coiled coil regions. Interacts tightly with GTP-bound but not GDP-bound CDC42. Requires Mg(2+) as cofactor.

It localises to the cytoplasm. The catalysed reaction is L-seryl-[protein] + ATP = O-phospho-L-seryl-[protein] + ADP + H(+). It carries out the reaction L-threonyl-[protein] + ATP = O-phospho-L-threonyl-[protein] + ADP + H(+). Maintained in an inactive, closed conformation by an interaction between the kinase domain and the negative autoregulatory C-terminal coiled-coil region. Agonist binding to the phorbol ester binding site disrupts this, releasing the kinase domain to allow N-terminus-mediated dimerization and kinase activation by transautophosphorylation. May act as a downstream effector of CDC42 in cytoskeletal reorganization. Contributes to the actomyosin contractility required for cell invasion, through the regulation of MYPT1 and thus MLC2 phosphorylation. This is Serine/threonine-protein kinase MRCK gamma from Mus musculus (Mouse).